The chain runs to 1787 residues: Chromodomain-helicase-DNA-binding protein 3 homolog (1787 aa).

Disordered regions lie at residues 1–80 (MSDD…PDPY) and 170–258 (PVTP…KEQG). The segment covering 10 to 43 (DGDETMEEDSMLAEGHEDGEEDVGEDEEEVETEE) has biased composition (acidic residues). The span at 56 to 71 (PPPKKKKGGKKSSKKK) shows a compositional bias: basic residues. The segment covering 192-243 (DGSDGEGGGHDSDQEFEALIKQHEKQQDEAEKGKEEARINRAAAKVDKRKAA) has biased composition (basic and acidic residues). PHD-type zinc fingers lie at residues 265–312 (QENC…CEEH) and 328–375 (MDYC…CIIP). Chromo domains follow at residues 373–476 (IIPE…STLS) and 501–583 (MQIH…GPKE). Positions 628–812 (RHCWSNGTDA…FHLLNFLAPD (185 aa)) constitute a Helicase ATP-binding domain. Residue 641–648 (DEMGLGKT) participates in ATP binding. The short motif at 763–766 (DEAH) is the DEAH box element. The region spanning 944–1107 (LLQKMLRKLK…GKSMSKTELD (164 aa)) is the Helicase C-terminal domain. 4 disordered regions span residues 1120-1141 (EEEAPVEGADGEGTSSKKPNEQ), 1186-1212 (TKEADDADDDEDETEVIKEGTEEQDPN), 1248-1295 (ENMG…EERS), and 1754-1787 (RASSIAATKDEPMDTSDKDIPSTSAAAGSSYPRY). The span at 1190–1199 (DDADDDEDET) shows a compositional bias: acidic residues. Over residues 1248 to 1261 (ENMGQDWSAQNNQQ) the composition is skewed to polar residues. Basic and acidic residues predominate over residues 1761-1773 (TKDEPMDTSDKDI).

It belongs to the SNF2/RAD54 helicase family. In terms of tissue distribution, expressed in the head and vulva.

It localises to the nucleus. It carries out the reaction ATP + H2O = ADP + phosphate + H(+). In terms of biological role, ATP-dependent chromatin-remodeling factor that has a role in notch signaling-dependent vulval cell fate determination. May also have a role in pharyngeal precursor cell specification. This Caenorhabditis elegans protein is Chromodomain-helicase-DNA-binding protein 3 homolog (chd-3).